A 129-amino-acid chain; its full sequence is Cytochrome c oxidase subunit 5B, mitochondrial (129 aa).

Residues 1 to 31 (MASRLLRGAGALAAQALRARGPSGAAAVRSM) constitute a mitochondrion transit peptide. N6-acetyllysine occurs at positions 68 and 86. Cysteine 91, cysteine 93, cysteine 113, and cysteine 116 together coordinate Zn(2+). Lysine 121 carries the post-translational modification N6-acetyllysine.

This sequence belongs to the cytochrome c oxidase subunit 5B family. Component of the cytochrome c oxidase (complex IV, CIV), a multisubunit enzyme composed of 14 subunits. The complex is composed of a catalytic core of 3 subunits MT-CO1, MT-CO2 and MT-CO3, encoded in the mitochondrial DNA, and 11 supernumerary subunits COX4I, COX5A, COX5B, COX6A, COX6B, COX6C, COX7A, COX7B, COX7C, COX8 and NDUFA4, which are encoded in the nuclear genome. The complex exists as a monomer or a dimer and forms supercomplexes (SCs) in the inner mitochondrial membrane with NADH-ubiquinone oxidoreductase (complex I, CI) and ubiquinol-cytochrome c oxidoreductase (cytochrome b-c1 complex, complex III, CIII), resulting in different assemblies (supercomplex SCI(1)III(2)IV(1) and megacomplex MCI(2)III(2)IV(2)).

The protein resides in the mitochondrion inner membrane. Its pathway is energy metabolism; oxidative phosphorylation. Component of the cytochrome c oxidase, the last enzyme in the mitochondrial electron transport chain which drives oxidative phosphorylation. The respiratory chain contains 3 multisubunit complexes succinate dehydrogenase (complex II, CII), ubiquinol-cytochrome c oxidoreductase (cytochrome b-c1 complex, complex III, CIII) and cytochrome c oxidase (complex IV, CIV), that cooperate to transfer electrons derived from NADH and succinate to molecular oxygen, creating an electrochemical gradient over the inner membrane that drives transmembrane transport and the ATP synthase. Cytochrome c oxidase is the component of the respiratory chain that catalyzes the reduction of oxygen to water. Electrons originating from reduced cytochrome c in the intermembrane space (IMS) are transferred via the dinuclear copper A center (CU(A)) of subunit 2 and heme A of subunit 1 to the active site in subunit 1, a binuclear center (BNC) formed by heme A3 and copper B (CU(B)). The BNC reduces molecular oxygen to 2 water molecules using 4 electrons from cytochrome c in the IMS and 4 protons from the mitochondrial matrix. This is Cytochrome c oxidase subunit 5B, mitochondrial (COX5B) from Pongo abelii (Sumatran orangutan).